The chain runs to 319 residues: Cytochrome c biogenesis protein CcsA (319 aa).

The next 5 helical transmembrane spans lie at 14 to 34 (AFAVLFLTMLLYWCGAAFPQW), 46 to 66 (AIANLCITGLLAARWIEGGYF), 74 to 94 (SLFFLCWGLTAMHFVAESISG), 97 to 117 (LVGVVTAPVAMGITAFAALSL), and 142 to 162 (VMMLSYATLMVGSLLAIALLV). A disordered region spans residues 175–201 (SVGTGSFRSRRPEPSLEASTGNGGTTV). The segment covering 191–201 (EASTGNGGTTV) has biased composition (polar residues). 3 consecutive transmembrane segments (helical) span residues 227–247 (MIGLGFPLLTIGIISGAVWAN), 254–274 (WSWDPKETWALIVWLVYAAYL), and 288–308 (AILATVGFGVVWVCYLGVNLL).

Belongs to the CcmF/CycK/Ccl1/NrfE/CcsA family. In terms of assembly, may interact with ccs1.

It localises to the cellular thylakoid membrane. Its function is as follows. Required during biogenesis of c-type cytochromes (cytochrome c6 and cytochrome f) at the step of heme attachment. The chain is Cytochrome c biogenesis protein CcsA from Thermosynechococcus vestitus (strain NIES-2133 / IAM M-273 / BP-1).